A 254-amino-acid polypeptide reads, in one-letter code: 2,3-bisphosphoglycerate-dependent phosphoglycerate mutase (254 aa).

Substrate is bound by residues 15–22 (RHGQSEWN), 28–29 (TG), Arg-67, 94–97 (ERHY), Lys-105, 121–122 (RR), and 188–189 (GN). The active-site Tele-phosphohistidine intermediate is His-16. Glu-94 acts as the Proton donor/acceptor in catalysis.

This sequence belongs to the phosphoglycerate mutase family. BPG-dependent PGAM subfamily.

It carries out the reaction (2R)-2-phosphoglycerate = (2R)-3-phosphoglycerate. Its pathway is carbohydrate degradation; glycolysis; pyruvate from D-glyceraldehyde 3-phosphate: step 3/5. In terms of biological role, catalyzes the interconversion of 2-phosphoglycerate and 3-phosphoglycerate. This chain is 2,3-bisphosphoglycerate-dependent phosphoglycerate mutase, found in Corynebacterium jeikeium (strain K411).